Reading from the N-terminus, the 220-residue chain is Phosphoribosylformylglycinamidine synthase subunit PurQ (220 aa).

The Glutamine amidotransferase type-1 domain maps to 2–220; sequence RVGVVVFPGS…LRSVLAGAKV (219 aa). C85 functions as the Nucleophile in the catalytic mechanism. Active-site residues include H193 and E195.

In terms of assembly, part of the FGAM synthase complex composed of 1 PurL, 1 PurQ and 2 PurS subunits.

The protein resides in the cytoplasm. It carries out the reaction N(2)-formyl-N(1)-(5-phospho-beta-D-ribosyl)glycinamide + L-glutamine + ATP + H2O = 2-formamido-N(1)-(5-O-phospho-beta-D-ribosyl)acetamidine + L-glutamate + ADP + phosphate + H(+). It catalyses the reaction L-glutamine + H2O = L-glutamate + NH4(+). It participates in purine metabolism; IMP biosynthesis via de novo pathway; 5-amino-1-(5-phospho-D-ribosyl)imidazole from N(2)-formyl-N(1)-(5-phospho-D-ribosyl)glycinamide: step 1/2. In terms of biological role, part of the phosphoribosylformylglycinamidine synthase complex involved in the purines biosynthetic pathway. Catalyzes the ATP-dependent conversion of formylglycinamide ribonucleotide (FGAR) and glutamine to yield formylglycinamidine ribonucleotide (FGAM) and glutamate. The FGAM synthase complex is composed of three subunits. PurQ produces an ammonia molecule by converting glutamine to glutamate. PurL transfers the ammonia molecule to FGAR to form FGAM in an ATP-dependent manner. PurS interacts with PurQ and PurL and is thought to assist in the transfer of the ammonia molecule from PurQ to PurL. This chain is Phosphoribosylformylglycinamidine synthase subunit PurQ, found in Rubrobacter xylanophilus (strain DSM 9941 / JCM 11954 / NBRC 16129 / PRD-1).